An 880-amino-acid chain; its full sequence is Translation initiation factor IF-2 (880 aa).

The tract at residues 1 to 251 (MVDTKNPGDK…PTAKPAPAKQ (251 aa)) is disordered. The segment covering 58-79 (PADAPAAPAPVAAAKPAPVRAP) has biased composition (low complexity). The span at 115-183 (ARIRDEEERK…KRFGEEEAKK (69 aa)) shows a compositional bias: basic and acidic residues. 2 stretches are compositionally biased toward low complexity: residues 184-215 (AAAA…VAAD) and 233-250 (AARP…APAK). Positions 376 to 547 (PRSPVVTVMG…ALQAELLDLK (172 aa)) constitute a tr-type G domain. Residues 385–392 (GHVDHGKT) are G1. 385–392 (GHVDHGKT) contacts GTP. A G2 region spans residues 410-414 (GITQH). Residues 433-436 (DTPG) are G3. Residues 433-437 (DTPGH) and 487-490 (NKID) each bind GTP. Residues 487-490 (NKID) form a G4 region. The segment at 523 to 525 (SAK) is G5.

The protein belongs to the TRAFAC class translation factor GTPase superfamily. Classic translation factor GTPase family. IF-2 subfamily.

The protein resides in the cytoplasm. Its function is as follows. One of the essential components for the initiation of protein synthesis. Protects formylmethionyl-tRNA from spontaneous hydrolysis and promotes its binding to the 30S ribosomal subunits. Also involved in the hydrolysis of GTP during the formation of the 70S ribosomal complex. The sequence is that of Translation initiation factor IF-2 from Rhodopseudomonas palustris (strain BisB18).